Here is an 828-residue protein sequence, read N- to C-terminus: Protein SEY1 homolog (828 aa).

At 1-718 (MTEDVMNDDF…SSKNGISWKN (718 aa)) the chain is on the cytoplasmic side. The GB1/RHD3-type G domain occupies 44 to 284 (GFNYNVLSIL…VPSDGFFYYA (241 aa)). 54 to 61 (GCQSSGKS) contributes to the GTP binding site. The chain crosses the membrane as a helical span at residues 719-739 (IPPPFWILLLLCSWNELCSVL). The Lumenal portion of the chain corresponds to 740-742 (RIV). Residues 743 to 763 (FKVQVLIPLIILGFIVVQYFS) traverse the membrane as a helical segment. The Cytoplasmic portion of the chain corresponds to 764-828 (HLVFGTSADA…NDSGKKAEEN (65 aa)).

The protein belongs to the TRAFAC class dynamin-like GTPase superfamily. GB1/RHD3 GTPase family. RHD3 subfamily.

Its subcellular location is the endoplasmic reticulum membrane. In terms of biological role, probable GTP-binding protein that may be involved in cell development. In Babesia bovis, this protein is Protein SEY1 homolog.